The primary structure comprises 269 residues: MNESPAQPLTETIPVFTTQNLDIYYGSHRAVRDVSLTIPKNKITAFIGPSGCGKSTILRCFNRLNDLIESFRLEGKVLYHSQDLYSPNIDVTAVRKYIGMVFQKPNPFPKTIFDNVVYGARVNGYKGNLEELAEDSLRRAALWDEVKDKLKASGFSLSGGQQQRLCIARAIAMQPEVLLMDEPCSALDPISTLKVEELMNELKENYTIIIVTHNMQQATRVADYTAFYNAEATDKGNKVGYLVEFDRTGKVFGDPQEQETKDYVSGRFG.

An ABC transporter domain is found at 16–255 (FTTQNLDIYY…DRTGKVFGDP (240 aa)). 48 to 55 (GPSGCGKS) is a binding site for ATP.

The protein belongs to the ABC transporter superfamily. Phosphate importer (TC 3.A.1.7) family. As to quaternary structure, the complex is composed of two ATP-binding proteins (PstB), two transmembrane proteins (PstC and PstA) and a solute-binding protein (PstS).

Its subcellular location is the cell inner membrane. It catalyses the reaction phosphate(out) + ATP + H2O = ADP + 2 phosphate(in) + H(+). Its function is as follows. Part of the ABC transporter complex PstSACB involved in phosphate import. Responsible for energy coupling to the transport system. This chain is Phosphate import ATP-binding protein PstB 1, found in Synechocystis sp. (strain ATCC 27184 / PCC 6803 / Kazusa).